Reading from the N-terminus, the 239-residue chain is 6-phosphogluconolactonase (239 aa).

It belongs to the glucosamine/galactosamine-6-phosphate isomerase family. 6-phosphogluconolactonase subfamily.

It catalyses the reaction 6-phospho-D-glucono-1,5-lactone + H2O = 6-phospho-D-gluconate + H(+). It functions in the pathway carbohydrate degradation; pentose phosphate pathway; D-ribulose 5-phosphate from D-glucose 6-phosphate (oxidative stage): step 2/3. Functionally, hydrolysis of 6-phosphogluconolactone to 6-phosphogluconate. The sequence is that of 6-phosphogluconolactonase (pgl) from Xylella fastidiosa (strain 9a5c).